The primary structure comprises 947 residues: Bifunctional glutamine synthetase adenylyltransferase/adenylyl-removing enzyme (947 aa).

The tract at residues 1-440 is adenylyl removase; the sequence is MTPLSSPLSQ…VFNELIGDDE (440 aa). Residues 450-947 are adenylyl transferase; the sequence is SEPWREVWQD…ASWRKWLVAV (498 aa).

The protein belongs to the GlnE family. It depends on Mg(2+) as a cofactor.

It catalyses the reaction [glutamine synthetase]-O(4)-(5'-adenylyl)-L-tyrosine + phosphate = [glutamine synthetase]-L-tyrosine + ADP. The catalysed reaction is [glutamine synthetase]-L-tyrosine + ATP = [glutamine synthetase]-O(4)-(5'-adenylyl)-L-tyrosine + diphosphate. Functionally, involved in the regulation of glutamine synthetase GlnA, a key enzyme in the process to assimilate ammonia. When cellular nitrogen levels are high, the C-terminal adenylyl transferase (AT) inactivates GlnA by covalent transfer of an adenylyl group from ATP to specific tyrosine residue of GlnA, thus reducing its activity. Conversely, when nitrogen levels are low, the N-terminal adenylyl removase (AR) activates GlnA by removing the adenylyl group by phosphorolysis, increasing its activity. The regulatory region of GlnE binds the signal transduction protein PII (GlnB) which indicates the nitrogen status of the cell. The protein is Bifunctional glutamine synthetase adenylyltransferase/adenylyl-removing enzyme of Salmonella paratyphi A (strain ATCC 9150 / SARB42).